The following is a 386-amino-acid chain: Nucleosome assembly protein 1-like 4 (386 aa).

The tract at residues 1 to 29 is disordered; the sequence is MADNSFSDGVPSDSLEAAKNASNTEKLTD. An N-acetylalanine modification is found at Ala-2. 3 positions are modified to phosphoserine: Ser-5, Ser-7, and Ser-12. Positions 20–29 are enriched in polar residues; it reads NASNTEKLTD. Ser-49 carries the phosphoserine modification. Thr-51 bears the Phosphothreonine mark. Ser-53 and Ser-54 each carry phosphoserine. Phosphothreonine is present on Thr-58. An N6-acetyllysine modification is found at Lys-105. Ser-125 is subject to Phosphoserine. An N6-acetyllysine modification is found at Lys-146. The Nuclear localization signal signature appears at 265-271; the sequence is IKKKQKH. Position 304 is a phosphoserine (Ser-304). Residues 339–370 show a composition bias toward acidic residues; the sequence is AIEDDDNFEEGEEGEEEELEGDEEAEDDDDAE. The disordered stretch occupies residues 339–386; the sequence is AIEDDDNFEEGEEGEEEELEGDEEAEDDDDAEINPKKEPSQPSECKQQ.

It belongs to the nucleosome assembly protein (NAP) family. In terms of assembly, interacts with core (H2A, H2B, H3, H4) and linker (H1) histones. Polyglutamylated and polyglycylated. These 2 modifications occur exclusively on glutamate residues and result in either polyglutamate or polyglycine chains on the gamma-carboxyl group. Both modifications can coexist on the same protein on adjacent residues, and lowering polyglycylation levels increases polyglutamylation, and reciprocally. Polyglutamylated by TTLL4. Post-translationally, phosphorylated at the G0/G1 boundary but it is not phosphorylated in S-phase. Phosphorylated protein remains in the cytoplasm in a complex with histones during the G0/G1 transition, whereas dephosphorylation triggers its transport into the nucleus at the G1/S-boundary.

The protein resides in the nucleus. The protein localises to the cytoplasm. Functionally, acts as a histone chaperone in nucleosome assembly. In Bos taurus (Bovine), this protein is Nucleosome assembly protein 1-like 4 (NAP1L4).